The chain runs to 1311 residues: Zinc finger protein 521 (1311 aa).

The C2H2-type 1; degenerate zinc finger occupies 47 to 67; that stretch reads HSCDSCLQVFESLSDITEHKI. The tract at residues 81-108 is disordered; sequence DPSCSWPASSPSSKDQTSPSHGEGCDFG. The segment covering 83 to 102 has biased composition (low complexity); it reads SCSWPASSPSSKDQTSPSHG. 7 C2H2-type zinc fingers span residues 118–140, 146–168, 174–196, 202–224, 246–269, 281–304, and 310–332; these read YPCQ…EQSH, FKCT…IKLH, YHCS…LKTH, YKCA…MQVH, QKCS…AECH, LQCM…EQVH, and NSCS…MDSH. The disordered stretch occupies residues 357–398; sequence TTPDSNLSVDSSTMVEAAPPIPKSRGRKRAAQQTSDMTGPSS. Composition is skewed to polar residues over residues 359 to 370 and 387 to 398; these read PDSNLSVDSSTM and AQQTSDMTGPSS. The C2H2-type 9; degenerate zinc-finger motif lies at 405–429; the sequence is YSCIYCNKQLFSSLAVLQIHLKTMH. 3 consecutive C2H2-type zinc fingers follow at residues 437–460, 477–500, and 513–536; these read HICQ…KQVH, YQCN…RCSH, and FFCP…RQVH. A Phosphoserine modification is found at Ser-546. The C2H2-type 13; atypical zinc finger occupies 560–585; it reads YSCSYCTNSPIFNSVLKLNKHIKENH. A phosphoserine mark is found at Ser-605 and Ser-608. 7 C2H2-type zinc fingers span residues 634–656, 664–686, 694–717, 722–745, 752–775, 783–805, and 809–832; these read YICN…LKTH, LTCP…VTIH, YICE…LDMH, FRCT…AVKH, YRCT…KHNH, HKCI…ITTH, and YNCR…REKH. The interval 863–883 is disordered; the sequence is TNSQESHNSHDGSEEDVDSSE. The C2H2-type 21; degenerate zinc-finger motif lies at 886–908; sequence YGCDICGAAYTMETLLQNHQLRD. C2H2-type zinc fingers lie at residues 930–952, 959–981, and 1020–1042; these read YKCN…MQTH, YMCP…KVTH, and FRCV…GTFH. A C2H2-type 25; degenerate zinc finger spans residues 1065–1083; that stretch reads YKCASCLKEFRSKQDLVKL. Positions 1105–1119 are enriched in low complexity; the sequence is PGLSLPPGASRPGLG. The interval 1105-1136 is disordered; the sequence is PGLSLPPGASRPGLGQNESLSAMEGKGKAGGL. 5 consecutive C2H2-type zinc fingers follow at residues 1138–1161, 1195–1217, 1225–1247, 1256–1279, and 1286–1309; these read TRCS…QTVH, YQCI…VANH, HECK…LIEH, FKCP…FSAH, and YDCT…MTQH. A Glycyl lysine isopeptide (Lys-Gly) (interchain with G-Cter in SUMO2) cross-link involves residue Lys-1146.

This sequence belongs to the krueppel C2H2-type zinc-finger protein family. Interacts with EBF1. Interacts with SMAD1 and SMAD4. Widely expressed. Expressed in all B-cell stages.

The protein resides in the nucleus. Functionally, transcription factor that can both act as an activator or a repressor depending on the context. Involved in BMP signaling and in the regulation of the immature compartment of the hematopoietic system. Associates with SMADs in response to BMP2 leading to activate transcription of BMP target genes. Acts as a transcriptional repressor via its interaction with EBF1, a transcription factor involved specification of B-cell lineage; this interaction preventing EBF1 to bind DNA and activate target genes. In Mus musculus (Mouse), this protein is Zinc finger protein 521 (Znf521).